The sequence spans 691 residues: Replication and transcription activator (691 aa).

O-linked (GlcNAc) threonine; by host glycosylation is found at T366 and T367. Disordered regions lie at residues E482–P582 and L626–G677. The span at T504–T513 shows a compositional bias: low complexity. Positions P515–A531 are enriched in basic residues. The span at T539 to P556 shows a compositional bias: low complexity. Polar residues predominate over residues E655–G677.

The protein belongs to the herpesviridae TAF50 family. As to quaternary structure, homotetramer. Interacts with KTA/ORF57. Interacts with host PARP1; this interaction negatively regulates RTA/ORF50 transactivation activity. Interacts with host SMC5 and SMC6; these interactions remove the repressive chromatin structure to allow viral reactivation. Interacts with host POU2F1; this interaction enhances RTA/ORF50-mediated transactivation of several viral promoters including K-bZIP promoter.

The protein localises to the host nucleus. The enzyme catalyses S-ubiquitinyl-[E2 ubiquitin-conjugating enzyme]-L-cysteine + [acceptor protein]-L-lysine = [E2 ubiquitin-conjugating enzyme]-L-cysteine + N(6)-ubiquitinyl-[acceptor protein]-L-lysine.. Its function is as follows. Transcriptional transactivator that is necessary and sufficient for reactivation of the virus from latency. Acts post-transcriptionally and transcriptionally to regulate viral lytic gene expression and synergistically with ORF57 activates certain early and late viral promoters including its own promoter. Autostimulation on its promoter is mediated by the formation of a ternary complex between ORF50 and the cellular components HGMB1 and POU2F1. Also possesses a bimodal activity in targeting proteins for degradation through using its own E3 ligase activity or by stabilizing and chaperoning host E3 ligases. These activities help to subvert the host innate and adaptive immune responses while also modulating the host transcriptome and protein landscape to promote virus production. For instance, targets the host SMC5/6 complex for ubiquitination and subsequent degradation through the ubiquitin-proteasome during reactivation while during latency, host SMC5/6 complex binds to the viral episome and condenses viral chromatin, creating a repressive chromatin structure to silence genome transcription. Hijacks the cellular E3 ligase complex RNF20/40 to increase the level of transcriptionally active RNA polymerase II on viral gene promoters thereby facilitating lytic gene expression. Acts as a SUMO-targeting ubiquitin ligase and affects general sumoylation of cellular proteins. Promotes the polyubiquitination and subsequent degradation of host MYD88 and thereby inhibits MYD88-mediated TLR4 signaling. Induces the degradation of vFLIP/ORF71 together with cellular ubiquitin ligase ITCH to prevent vFLIP-induced NF-kappa-B signaling. This Homo sapiens (Human) protein is Replication and transcription activator (ORF50).